Here is a 293-residue protein sequence, read N- to C-terminus: Diaminopimelate epimerase (293 aa).

3 residues coordinate substrate: N17, Q47, and N67. C76 functions as the Proton donor in the catalytic mechanism. Substrate-binding positions include 77 to 78, N164, N197, and 215 to 216; these read GN and ER. Residue C224 is the Proton acceptor of the active site. Residue 225 to 226 coordinates substrate; it reads GS.

This sequence belongs to the diaminopimelate epimerase family. In terms of assembly, homodimer.

It is found in the cytoplasm. The enzyme catalyses (2S,6S)-2,6-diaminopimelate = meso-2,6-diaminopimelate. Its pathway is amino-acid biosynthesis; L-lysine biosynthesis via DAP pathway; DL-2,6-diaminopimelate from LL-2,6-diaminopimelate: step 1/1. Its function is as follows. Catalyzes the stereoinversion of LL-2,6-diaminopimelate (L,L-DAP) to meso-diaminopimelate (meso-DAP), a precursor of L-lysine and an essential component of the bacterial peptidoglycan. The chain is Diaminopimelate epimerase from Rhodopseudomonas palustris (strain BisB5).